A 272-amino-acid polypeptide reads, in one-letter code: Prohibitin 1 (272 aa).

A coiled-coil region spans residues 177 to 211; sequence KEFTEAVEMKQVAQQEAERARFIVEKAEQQKKAAV.

The mitochondrial prohibitin complex consists of two subunits (PHB1 and PHB2), assembled into a membrane-associated ring-shaped supercomplex of approximately 1 mDa.

Its subcellular location is the mitochondrion inner membrane. It localises to the nucleus. The protein resides in the cytoplasm. The protein localises to the cell membrane. Functionally, protein with pleiotropic attributes mediated in a cell-compartment- and tissue-specific manner, which include the plasma membrane-associated cell signaling functions, mitochondrial chaperone, and transcriptional co-regulator of transcription factors in the nucleus. In the mitochondria, together with PHB2, forms large ring complexes (prohibitin complexes) in the inner mitochondrial membrane (IMM) and functions as a chaperone protein that stabilizes mitochondrial respiratory enzymes and maintains mitochondrial integrity in the IMM, which is required for mitochondrial morphogenesis, neuronal survival, and normal lifespan. In terms of biological role, in the nucleus, acts as a transcription coregulator, enhances promoter binding by TP53, a transcription factor it activates, but reduces the promoter binding by E2F1, a transcription factor it represses. Its function is as follows. In the plasma membrane, cooperates with CD86 to mediate CD86-signaling in B lymphocytes that regulates the level of IgG1 produced through the activation of distal signaling intermediates. Upon CD40 engagement, required to activate NF-kappa-B signaling pathway via phospholipase C and protein kinase C activation. The protein is Prohibitin 1 (PHB1) of Gallus gallus (Chicken).